Consider the following 518-residue polypeptide: MARAKTVKRDSVTHIYQTCKQAGTCPPDVINKVEQTTVADNILKYGSAGVFFGGLGISTGRGTGGATGYVPLGEGPGVRVGGTPTVVRPSLVPETIGPVDILPIDTVNPVEPTASSVVPLTESTGADLLPGEVETIAEIHPVPEGPSVDTPVVTTSTGSSAVLEVAPEPIPPTRVRVSRTQYHNPSFQIITESTPAQGESSLADHVLVTSGSGGQRIGGDITDIIELEEIPSRYTFEIEEPTPPRRSSTPLPRNQSVGRRRGFSLTNRRLVQQVQVDNPLFLTQPSKLVRFAFDNPVFEEEVTNIFENDLDVFEEPPDRDFLDVRELGRPQYSTTPAGYVRVSRLGTRATIRTRSGAQIGSQVHFYRDLSSINTEDPIELQLLGQHSGDATIVHGPVESTFIDMDISENPLSESIEAYSHDLLLDETVEDFSGSQLVIGNRRSTNSYTVPRFETTRNGSYYTQDTKGYYVAYPESRNNAEIIYPTPDIPVVIIHPHDSTGDFYLHPSLHRRKRKRKYL.

Positions 1–10 (MARAKTVKRD) match the Nuclear localization signal motif. Cysteine 19 and cysteine 25 form a disulfide bridge. Residues 237–262 (EIEEPTPPRRSSTPLPRNQSVGRRRG) form a disordered region. Positions 510–517 (RRKRKRKY) match the Nuclear localization signal motif.

This sequence belongs to the papillomaviridae L2 protein family. Interacts with major capsid protein L1. Interacts with E2; this interaction inhibits E2 transcriptional activity but not the DNA replication function E2. Interacts with host GADD45GIP1. Interacts with host HSPA8; this interaction is required for L2 nuclear translocation. Interacts with host importins KPNB2 and KPNB3. Forms a complex with importin alpha2-beta1 heterodimers via interaction with the importin alpha2 adapter. Interacts with host DYNLT1; this interaction is essential for virus intracellular transport during entry. Interacts (via C-terminus) with host retromer subunits VPS35 and VPS29. Post-translationally, highly phosphorylated.

It is found in the virion. Its subcellular location is the host nucleus. The protein resides in the host early endosome. It localises to the host Golgi apparatus. Functionally, minor protein of the capsid that localizes along the inner surface of the virion, within the central cavities beneath the L1 pentamers. Plays a role in capsid stabilization through interaction with the major capsid protein L1. Once the virion enters the host cell, L2 escorts the genomic DNA into the nucleus by promoting escape from the endosomal compartments and traffic through the host Golgi network. Mechanistically, the C-terminus of L2 possesses a cell-penetrating peptide that protudes from the host endosome, interacts with host cytoplasmic retromer cargo and thereby mediates the capsid delivery to the host trans-Golgi network. Plays a role through its interaction with host dynein in the intracellular microtubule-dependent transport of viral capsid toward the nucleus. Mediates the viral genome import into the nucleus through binding to host importins. Once within the nucleus, L2 localizes viral genomes to host PML bodies in order to activate early gene expression for establishment of infection. Later on, promotes late gene expression by interacting with the viral E2 protein and by inhibiting its transcriptional activation functions. During virion assembly, encapsidates the genome by direct interaction with the viral DNA. The polypeptide is Minor capsid protein L2 (Homo sapiens (Human)).